The following is a 1060-amino-acid chain: DNA-directed RNA polymerase subunit beta (1060 aa).

This sequence belongs to the RNA polymerase beta chain family. As to quaternary structure, in plastids the minimal PEP RNA polymerase catalytic core is composed of four subunits: alpha, beta, beta', and beta''. When a (nuclear-encoded) sigma factor is associated with the core the holoenzyme is formed, which can initiate transcription.

The protein localises to the plastid. It is found in the chloroplast. It catalyses the reaction RNA(n) + a ribonucleoside 5'-triphosphate = RNA(n+1) + diphosphate. DNA-dependent RNA polymerase catalyzes the transcription of DNA into RNA using the four ribonucleoside triphosphates as substrates. The protein is DNA-directed RNA polymerase subunit beta of Calycanthus floridus var. glaucus (Eastern sweetshrub).